A 435-amino-acid polypeptide reads, in one-letter code: Aspartate aminotransferase (435 aa).

Residues tyrosine 69 and 100–101 (SL) each bind pyridoxal 5'-phosphate. 139 to 141 (YDR) provides a ligand contact to substrate. Pyridoxal 5'-phosphate-binding positions include asparagine 189, tyrosine 221, and 254–256 (STS). Arginine 392 is a binding site for substrate.

The protein belongs to the class-I pyridoxal-phosphate-dependent aminotransferase family. The cofactor is pyridoxal 5'-phosphate.

It carries out the reaction L-aspartate + 2-oxoglutarate = oxaloacetate + L-glutamate. Main aspartate aminotransferase that couples nitrogen assimilation to aspartate synthesis. Has a weak, but significant, side activity toward kynurenine (Kyn). Oxaloacetate and 2-oxoglutarate, but not pyruvate, serve as amino acceptors, while Asp, Glu and Kyn serve as the best amino donors. Essential for axenic growth and survival of M.tuberculosis in macrophages and in mice. This chain is Aspartate aminotransferase, found in Mycobacterium tuberculosis (strain ATCC 25618 / H37Rv).